The primary structure comprises 377 residues: TraB domain-containing protein (377 aa).

Met1 is subject to N-acetylmethionine. The disordered stretch occupies residues Met1–Pro34. Thr65 carries the post-translational modification Phosphothreonine.

The polypeptide is TraB domain-containing protein (TRABD) (Bos taurus (Bovine)).